The sequence spans 683 residues: Long-chain-fatty-acid--CoA ligase 5 (683 aa).

A helical; Signal-anchor for type III membrane protein membrane pass occupies residues 12 to 32 (LPTPALICLLTFGTAIFLWLI). Residues 33–683 (NRPQPVLPLI…IKSLYESIEE (651 aa)) lie on the Cytoplasmic side of the membrane. Lysine 361 carries the N6-acetyllysine modification.

Belongs to the ATP-dependent AMP-binding enzyme family. Expressed most abundantly in the small intestine, and to a much lesser extent in the lung, liver, adrenal gland, adipose tissue and kidney.

The protein localises to the mitochondrion. The protein resides in the endoplasmic reticulum. It is found in the mitochondrion outer membrane. It localises to the endoplasmic reticulum membrane. Its subcellular location is the cell membrane. It catalyses the reaction a long-chain fatty acid + ATP + CoA = a long-chain fatty acyl-CoA + AMP + diphosphate. The catalysed reaction is (5Z,8Z,11Z,14Z)-eicosatetraenoate + ATP + CoA = (5Z,8Z,11Z,14Z)-eicosatetraenoyl-CoA + AMP + diphosphate. The enzyme catalyses 15-hydroxy-(5Z,8Z,11Z,13E)-eicosatetraenoate + ATP + CoA = 15-hydroxy-(5Z,8Z,11Z,13E)-eicosatetraenoyl-CoA + AMP + diphosphate. It carries out the reaction 12-hydroxy-(5Z,8Z,10E,14Z)-eicosatetraenoate + ATP + CoA = 12-hydroxy-(5Z,8Z,10E,14Z)-eicosatetraenoyl-CoA + AMP + diphosphate. It catalyses the reaction 5-hydroxy-(6E,8Z,11Z,14Z)-eicosatetraenoate + ATP + CoA = 5-hydroxy-(6E,8Z,11Z,14Z)-eicosatetraenoyl-CoA + AMP + diphosphate. The catalysed reaction is 14,15-epoxy-(5Z,8Z,11Z)-eicosatrienoate + ATP + CoA = 14,15-epoxy-(5Z,8Z,11Z)-eicosatrienoyl-CoA + AMP + diphosphate. The enzyme catalyses 11,12-epoxy-(5Z,8Z,14Z)-eicosatrienoate + ATP + CoA = 11,12-epoxy-(5Z,8Z,14Z)-eicosatrienoyl-CoA + AMP + diphosphate. It carries out the reaction hexadecanoate + ATP + CoA = hexadecanoyl-CoA + AMP + diphosphate. It catalyses the reaction (E)-hexadec-2-enoate + ATP + CoA = (2E)-hexadecenoyl-CoA + AMP + diphosphate. The catalysed reaction is (9Z)-octadecenoate + ATP + CoA = (9Z)-octadecenoyl-CoA + AMP + diphosphate. In terms of biological role, catalyzes the conversion of long-chain fatty acids to their active form acyl-CoAs for both synthesis of cellular lipids, and degradation via beta-oxidation. ACSL5 may sensitize epithelial cells to apoptosis specifically triggered by the death ligand TRAIL at the villus tip of the crypt-villus axis of the small intestine. May have a role in the survival of glioma cells. May activate fatty acids from exogenous sources for the synthesis of triacylglycerol destined for intracellular storage. It was suggested that it may also stimulate fatty acid oxidation. Utilizes a wide range of saturated fatty acids with a preference for C16-C18 unsaturated fatty acids. The sequence is that of Long-chain-fatty-acid--CoA ligase 5 from Rattus norvegicus (Rat).